The following is a 501-amino-acid chain: Probable malate:quinone oxidoreductase (501 aa).

It belongs to the MQO family. The cofactor is FAD.

The catalysed reaction is (S)-malate + a quinone = a quinol + oxaloacetate. The protein operates within carbohydrate metabolism; tricarboxylic acid cycle; oxaloacetate from (S)-malate (quinone route): step 1/1. This is Probable malate:quinone oxidoreductase from Paenarthrobacter aurescens (strain TC1).